A 92-amino-acid polypeptide reads, in one-letter code: Small ribosomal subunit protein uS19 (92 aa).

Belongs to the universal ribosomal protein uS19 family.

Functionally, protein S19 forms a complex with S13 that binds strongly to the 16S ribosomal RNA. This Rhodopseudomonas palustris (strain BisA53) protein is Small ribosomal subunit protein uS19.